Here is a 209-residue protein sequence, read N- to C-terminus: Guanylate kinase (209 aa).

In terms of domain architecture, Guanylate kinase-like spans 10–189; that stretch reads GLLLVLSAPS…AFSDLRSVVV (180 aa). 17–24 contacts ATP; it reads APSGAGKT.

It belongs to the guanylate kinase family.

The protein localises to the cytoplasm. The enzyme catalyses GMP + ATP = GDP + ADP. Its function is as follows. Essential for recycling GMP and indirectly, cGMP. This is Guanylate kinase from Myxococcus xanthus (strain DK1622).